Reading from the N-terminus, the 113-residue chain is Gigasin-5 (113 aa).

Component of the organic matrix of calcified shell layers.

This chain is Gigasin-5, found in Magallana gigas (Pacific oyster).